Reading from the N-terminus, the 239-residue chain is 7-cyano-7-deazaguanine synthase (239 aa).

16–26 (FSGGQDSTTCL) lines the ATP pocket. Zn(2+) is bound by residues Cys-204, Cys-219, Cys-222, and Cys-225.

Belongs to the QueC family. Zn(2+) is required as a cofactor.

It carries out the reaction 7-carboxy-7-deazaguanine + NH4(+) + ATP = 7-cyano-7-deazaguanine + ADP + phosphate + H2O + H(+). It participates in purine metabolism; 7-cyano-7-deazaguanine biosynthesis. Catalyzes the ATP-dependent conversion of 7-carboxy-7-deazaguanine (CDG) to 7-cyano-7-deazaguanine (preQ(0)). This Polaromonas naphthalenivorans (strain CJ2) protein is 7-cyano-7-deazaguanine synthase.